The primary structure comprises 232 residues: Nucleolar protein 16 (232 aa).

The span at 1-14 shows a compositional bias: basic residues; it reads MGRELQKRKKRSSR. Disordered stretches follow at residues 1–20 and 113–161; these read MGRELQKRKKRSSRAKVQTH and RSDN…QSSR. Basic and acidic residues predominate over residues 132-154; sequence EEPKPKNPTHDIEWHGISDDRQE.

Belongs to the NOP16 family. Component of the pre-66S ribosomal particle.

The protein localises to the nucleus. Its subcellular location is the nucleolus. Functionally, involved in the biogenesis of the 60S ribosomal subunit. This Neurospora crassa (strain ATCC 24698 / 74-OR23-1A / CBS 708.71 / DSM 1257 / FGSC 987) protein is Nucleolar protein 16 (nop-16).